The sequence spans 309 residues: Zinc-finger homeodomain protein 5 (309 aa).

The segment covering 1–16 has biased composition (basic and acidic residues); sequence MDMRSHEMIERRREDN. Residues 1-21 are disordered; that stretch reads MDMRSHEMIERRREDNGNNNG. The ZF-HD dimerization-type; degenerate zinc finger occupies 76-125; the sequence is YRECLKNHAASVGGSVHDGCGEFMPSGEEGTIEALRCAACDCHRNFHRKE. The homeobox DNA-binding region spans 240–303; that stretch reads KKRFRTKFTT…NNKNNAKKPP (64 aa).

Homo- and heterodimer with other ZFHD proteins. Interacts with MIF1, MIF2 and MIF3; these interactions prevent nuclear localization and DNA-binding to inhibit transcription regulation activity. Binds to ZHD1, ZHD2, ZHD4, ZHD10 and ZHD11. In terms of tissue distribution, mostly expressed in flowers and inflorescence.

The protein resides in the nucleus. In terms of biological role, putative transcription factor. Binds DNA at 5'-ATTA-3' consensus promoter regions. Regulates floral architecture and leaf development. Regulators in the abscisic acid (ABA) signal pathway that confers sensitivity to ABA in an ARF2-dependent manner. The protein is Zinc-finger homeodomain protein 5 (ZHD5) of Arabidopsis thaliana (Mouse-ear cress).